Reading from the N-terminus, the 70-residue chain is MLKFLNLTSTSLVLTSAYNVQNIYLAELLISNRIQFHKRLHQQRTAHKVTSPPSQRPQNSETKSDSQNRS.

A disordered region spans residues 40 to 70; it reads LHQQRTAHKVTSPPSQRPQNSETKSDSQNRS. Residues 51 to 61 are compositionally biased toward polar residues; the sequence is SPPSQRPQNSE.

This is an uncharacterized protein from Bdellovibrio phage phiMH2K (Bacteriophage phiMH2K).